Reading from the N-terminus, the 466-residue chain is MAKTLYEKLFDTHVVYEAENETPLLYIDRHLVHEVTSPQAFDGLRAHGRPVRQPGKTFATMDHNVSTQTKDINACGEMARIQMQELIKNCKEFGVELYDLNHPYQGIVHVMGPEQGVTLPGMTIVCGDSHTATHGAFGALAFGIGTSEVEHVLATQTLKQGRAKTMKIEVQGKAAPGITAKDIVLAIIGKTGSAGGTGHVVEFCGEAIRDLSMEGRMTLCNMAIEMGAKAGLVAPDETTFNYVKGRLHAPKGKDFDDAVAYWKTLQTDEGATFDTVVTLQAEEISPQVTWGTNPGQVISVNDNIPDPASFADPVERALAEKALAYMGLKPGIPLTEVAIDKVFIGSCTNSRIEDLRAAAEIAKGRKVAPGVQALVVPGSGPVKAQAEAEGLDKIFIEAGFEWRLPGCSMCLAMNNDRLNPGERCASTSNRNFEGRQGRGGRTHLVSPAMAAAAAVTGHFADIRNIK.

[4Fe-4S] cluster contacts are provided by Cys-347, Cys-407, and Cys-410.

The protein belongs to the aconitase/IPM isomerase family. LeuC type 1 subfamily. Heterodimer of LeuC and LeuD. [4Fe-4S] cluster is required as a cofactor.

The catalysed reaction is (2R,3S)-3-isopropylmalate = (2S)-2-isopropylmalate. It participates in amino-acid biosynthesis; L-leucine biosynthesis; L-leucine from 3-methyl-2-oxobutanoate: step 2/4. In terms of biological role, catalyzes the isomerization between 2-isopropylmalate and 3-isopropylmalate, via the formation of 2-isopropylmaleate. This Shigella dysenteriae serotype 1 (strain Sd197) protein is 3-isopropylmalate dehydratase large subunit.